The sequence spans 29 residues: Cytochrome b6-f complex subunit 8 (29 aa).

A helical membrane pass occupies residues 3-23; the sequence is ILTLGWVSLLVVFTWSIAMVV.

The protein belongs to the PetN family. As to quaternary structure, the 4 large subunits of the cytochrome b6-f complex are cytochrome b6, subunit IV (17 kDa polypeptide, PetD), cytochrome f and the Rieske protein, while the 4 small subunits are PetG, PetL, PetM and PetN. The complex functions as a dimer.

The protein localises to the cellular thylakoid membrane. Functionally, component of the cytochrome b6-f complex, which mediates electron transfer between photosystem II (PSII) and photosystem I (PSI), cyclic electron flow around PSI, and state transitions. This Nostoc punctiforme (strain ATCC 29133 / PCC 73102) protein is Cytochrome b6-f complex subunit 8.